We begin with the raw amino-acid sequence, 642 residues long: Threonine--tRNA ligase (642 aa).

Positions 1–63 (MNDITVTLPD…YNDARVVIVT (63 aa)) constitute a TGS domain. The interval 242 to 533 (DHRKIGQELD…LIEHFNGKFP (292 aa)) is catalytic. Residues C334, H385, and H510 each contribute to the Zn(2+) site.

The protein belongs to the class-II aminoacyl-tRNA synthetase family. In terms of assembly, homodimer. It depends on Zn(2+) as a cofactor.

It is found in the cytoplasm. The enzyme catalyses tRNA(Thr) + L-threonine + ATP = L-threonyl-tRNA(Thr) + AMP + diphosphate + H(+). In terms of biological role, catalyzes the attachment of threonine to tRNA(Thr) in a two-step reaction: L-threonine is first activated by ATP to form Thr-AMP and then transferred to the acceptor end of tRNA(Thr). The sequence is that of Threonine--tRNA ligase from Haloquadratum walsbyi (strain DSM 16790 / HBSQ001).